A 520-amino-acid polypeptide reads, in one-letter code: GMP synthase [glutamine-hydrolyzing] (520 aa).

The region spanning S9–D202 is the Glutamine amidotransferase type-1 domain. The Nucleophile role is filled by C86. Active-site residues include H176 and E178. Positions W203 to R395 constitute a GMPS ATP-PPase domain. S230 to S236 contributes to the ATP binding site.

As to quaternary structure, homodimer.

The catalysed reaction is XMP + L-glutamine + ATP + H2O = GMP + L-glutamate + AMP + diphosphate + 2 H(+). It functions in the pathway purine metabolism; GMP biosynthesis; GMP from XMP (L-Gln route): step 1/1. Its function is as follows. Catalyzes the synthesis of GMP from XMP. The chain is GMP synthase [glutamine-hydrolyzing] from Allorhizobium ampelinum (strain ATCC BAA-846 / DSM 112012 / S4) (Agrobacterium vitis (strain S4)).